The primary structure comprises 124 residues: MLKSKIHRATITDACIDYEGSITIDKNLMQAANLLPYEQVHVVNVNNGTRLETYVIEGPAGSGQICLNGAAARMGMKGDKVIILGYSLITEEDTLTHQPNLVYVDSLNRITKVKNGVASRNLEV.

Residue Ser-21 is the Schiff-base intermediate with substrate; via pyruvic acid of the active site. Position 21 is a pyruvic acid (Ser) (Ser-21). Thr-53 is a binding site for substrate. Tyr-54 (proton donor) is an active-site residue. Gly-69 to Ala-71 serves as a coordination point for substrate.

The protein belongs to the PanD family. As to quaternary structure, heterooctamer of four alpha and four beta subunits. Pyruvate serves as cofactor. In terms of processing, is synthesized initially as an inactive proenzyme, which is activated by self-cleavage at a specific serine bond to produce a beta-subunit with a hydroxyl group at its C-terminus and an alpha-subunit with a pyruvoyl group at its N-terminus.

The protein localises to the cytoplasm. It catalyses the reaction L-aspartate + H(+) = beta-alanine + CO2. It participates in cofactor biosynthesis; (R)-pantothenate biosynthesis; beta-alanine from L-aspartate: step 1/1. In terms of biological role, catalyzes the pyruvoyl-dependent decarboxylation of aspartate to produce beta-alanine. The chain is Aspartate 1-decarboxylase from Dehalococcoides mccartyi (strain ATCC BAA-2266 / KCTC 15142 / 195) (Dehalococcoides ethenogenes (strain 195)).